A 181-amino-acid chain; its full sequence is MMILVTGGARSGKSRHAEALIGDSSQVLYIATSQILDDEMAARIEHHRQGRPEHWRTVERWQHLDELIHADINPNEVVLLECVTTMVTNLLFDYGGDKDPDEWDYQAMEQAINAEIQSLIAACQRCPAKVVLVTNEVGMGIVPESRLARHFRDIAGRVNQQLAAAANEVWLVVSGIGVKIK.

Residues 7–14 (GGARSGKS) and 31–33 (ATS) contribute to the GTP site. Residue H47 is the GMP-histidine intermediate of the active site. Residues 48 to 51 (RQGR), E59, and E81 contribute to the GTP site.

It belongs to the CobU/CobP family. In terms of assembly, homodimer.

It carries out the reaction adenosylcob(III)inamide + GTP = adenosylcob(III)inamide phosphate + GDP + H(+). It catalyses the reaction adenosylcob(III)inamide + ATP = adenosylcob(III)inamide phosphate + ADP + H(+). The enzyme catalyses adenosylcob(III)inamide phosphate + GTP + H(+) = adenosylcob(III)inamide-GDP + diphosphate. It participates in cofactor biosynthesis; adenosylcobalamin biosynthesis; adenosylcobalamin from cob(II)yrinate a,c-diamide: step 5/7. Its pathway is cofactor biosynthesis; adenosylcobalamin biosynthesis; adenosylcobalamin from cob(II)yrinate a,c-diamide: step 6/7. In terms of biological role, catalyzes ATP-dependent phosphorylation of adenosylcobinamide and addition of GMP to adenosylcobinamide phosphate. The polypeptide is Bifunctional adenosylcobalamin biosynthesis protein CobU (cobU) (Escherichia coli (strain K12)).